A 120-amino-acid polypeptide reads, in one-letter code: Movement protein TGB2 (120 aa).

Residues 1–8 are Cytoplasmic-facing; the sequence is MPFAQPPD. The chain crosses the membrane as a helical span at residues 9–29; sequence YSKSVFPIAVGIAVAVVLFTL. At 30–71 the chain is on the lumenal side; sequence TRSTLPQVGDNIHNLPHGGNYQDGTKRISYCGPRDSFPSSSL. A helical membrane pass occupies residues 72 to 92; the sequence is ISSGTPMIIGIIIFLIFAIYV. Over 93 to 120 the chain is Cytoplasmic; the sequence is SEKWSRSGSRRCSCCVPGAPACTATVHE.

Belongs to the Tymovirales TGBp2 protein family.

The protein localises to the host endoplasmic reticulum membrane. Its function is as follows. Plays a role in viral cell-to-cell propagation, by facilitating genome transport to neighboring plant cells through plasmosdesmata,. The chain is Movement protein TGB2 from Crataegus (hawthorn).